The sequence spans 406 residues: Tryptophan synthase beta chain (406 aa).

Position 95 is an N6-(pyridoxal phosphate)lysine (K95).

It belongs to the TrpB family. As to quaternary structure, tetramer of two alpha and two beta chains. Pyridoxal 5'-phosphate is required as a cofactor.

The catalysed reaction is (1S,2R)-1-C-(indol-3-yl)glycerol 3-phosphate + L-serine = D-glyceraldehyde 3-phosphate + L-tryptophan + H2O. It participates in amino-acid biosynthesis; L-tryptophan biosynthesis; L-tryptophan from chorismate: step 5/5. In terms of biological role, the beta subunit is responsible for the synthesis of L-tryptophan from indole and L-serine. The sequence is that of Tryptophan synthase beta chain from Pseudomonas fluorescens (strain ATCC BAA-477 / NRRL B-23932 / Pf-5).